A 180-amino-acid chain; its full sequence is ATP-dependent protease subunit HslV (180 aa).

Residue threonine 6 is part of the active site. Positions 164, 167, and 170 each coordinate Na(+).

It belongs to the peptidase T1B family. HslV subfamily. A double ring-shaped homohexamer of HslV is capped on each side by a ring-shaped HslU homohexamer. The assembly of the HslU/HslV complex is dependent on binding of ATP.

It localises to the cytoplasm. It catalyses the reaction ATP-dependent cleavage of peptide bonds with broad specificity.. Its activity is regulated as follows. Allosterically activated by HslU binding. In terms of biological role, protease subunit of a proteasome-like degradation complex believed to be a general protein degrading machinery. The polypeptide is ATP-dependent protease subunit HslV (Borrelia turicatae (strain 91E135)).